A 281-amino-acid chain; its full sequence is Histidine biosynthesis bifunctional protein hisIE, chloroplastic (281 aa).

A chloroplast-targeting transit peptide spans 1 to 50; the sequence is MAVSYNALAQSLARSSCFIPKPYSFRDTKLRSRSNVVFACNDNKNIALQA. A phosphoribosyl-AMP cyclohydrolase region spans residues 51–178; sequence KVDNLLDRIK…NKLALTTLYS (128 aa). The phosphoribosyl-ATP pyrophosphohydrolase stretch occupies residues 179–281; sequence LESIISKRKE…GIEEKQNRTK (103 aa).

The protein in the N-terminal section; belongs to the PRA-CH family. It in the C-terminal section; belongs to the PRA-PH family. As to expression, ubiquitously expressed throughout development.

The protein localises to the plastid. It is found in the chloroplast. The enzyme catalyses 1-(5-phospho-beta-D-ribosyl)-ATP + H2O = 1-(5-phospho-beta-D-ribosyl)-5'-AMP + diphosphate + H(+). It carries out the reaction 1-(5-phospho-beta-D-ribosyl)-5'-AMP + H2O = 1-(5-phospho-beta-D-ribosyl)-5-[(5-phospho-beta-D-ribosylamino)methylideneamino]imidazole-4-carboxamide. It functions in the pathway amino-acid biosynthesis; L-histidine biosynthesis; L-histidine from 5-phospho-alpha-D-ribose 1-diphosphate: step 2/9. It participates in amino-acid biosynthesis; L-histidine biosynthesis; L-histidine from 5-phospho-alpha-D-ribose 1-diphosphate: step 3/9. This Arabidopsis thaliana (Mouse-ear cress) protein is Histidine biosynthesis bifunctional protein hisIE, chloroplastic (HISN2).